The primary structure comprises 130 residues: Ribonuclease VapC22 (130 aa).

A PINc domain is found at 4–119; the sequence is VLLDSHVAYW…RLVTKDRRLR (116 aa). Residues Asp-7 and Asp-97 each coordinate Mg(2+).

Belongs to the PINc/VapC protein family. It depends on Mg(2+) as a cofactor.

Its subcellular location is the secreted. Toxic component of a type II toxin-antitoxin (TA) system. An RNase. Upon expression in M.smegmatis inhibits translation and colony formation. Its toxic effect on colony formation is neutralized by coexpression with cognate antitoxin VapB22; the effect on translation has not been tested but is probably neutralized also. In Mycobacterium tuberculosis (strain ATCC 25618 / H37Rv), this protein is Ribonuclease VapC22.